Consider the following 1349-residue polypeptide: Serine-aspartate repeat-containing protein D (1349 aa).

An N-terminal signal peptide occupies residues 1–35 (MLNRENKTAITRKGMVSNRLNKFSIRKYTVGTASI). The short motif at 23–34 (FSIRKYTVGTAS) is the YSIRK-G/S signaling motif element. Residues 36–568 (LVGTTLIFGL…NNQSGGAGQE (533 aa)) are ligand binding A region. A disordered region spans residues 54–185 (ESTNKELNEA…NKKVDAKTES (132 aa)). 2 stretches are compositionally biased toward polar residues: residues 62-71 (EATTSASDNQ) and 94-108 (EMVS…SNGN). Residues 130–145 (KSDEQASPKSTNEDLN) show a composition bias toward basic and acidic residues. Composition is skewed to polar residues over residues 146–155 (TKQTISNQEA) and 163–173 (NKSVVNVQPTN). Residues 174-183 (EENKKVDAKT) are compositionally biased toward basic and acidic residues. CNA-B domains follow at residues 569–680 (VYKI…IYKP), 681–791 (KYNL…YKTP), 792–901 (KYNL…FYKP), 902–1012 (TYNL…YKTP), and 1013–1123 (KYSL…EEDT). Disordered regions lie at residues 856-883 (FETP…TSTT), 972-992 (YTPT…GLTT), and 1081-1325 (AGLT…SNNA). Composition is skewed to polar residues over residues 860–869 (SGYTPTQVGS) and 972–981 (YTPTSVTSGN). Acidic residues-rich tracts occupy residues 1091 to 1101 (TEDDKDADGGE) and 1118 to 1288 (YFEE…DSDS). The LPXTG sorting signal motif lies at 1312–1316 (LPETG). T1315 is modified (pentaglycyl murein peptidoglycan amidated threonine). Residues 1316–1349 (GSENNGSNNATLFGGLFAALGSLLLFGRRKKQNK) constitute a propeptide, removed by sortase.

This sequence belongs to the serine-aspartate repeat-containing protein (SDr) family. As to quaternary structure, interacts with host DSG1; this interaction increases S.aureus adherence to keratinocytes.

The protein resides in the secreted. The protein localises to the cell wall. Cell surface-associated calcium-binding protein which plays an important role in adhesion and pathogenesis. Mediates interactions with components of the extracellular matrix such as host DSG1 to promote bacterial adhesion to host cells. Contributes to the resistance to killing by innate immune components such as neutrophils present in blood and thus attenuates bacterial clearance. This Staphylococcus aureus (strain NCTC 8325 / PS 47) protein is Serine-aspartate repeat-containing protein D (sdrD).